The sequence spans 122 residues: Large ribosomal subunit protein uL14 (122 aa).

Belongs to the universal ribosomal protein uL14 family. As to quaternary structure, part of the 50S ribosomal subunit. Forms a cluster with proteins L3 and L19. In the 70S ribosome, L14 and L19 interact and together make contacts with the 16S rRNA in bridges B5 and B8.

Functionally, binds to 23S rRNA. Forms part of two intersubunit bridges in the 70S ribosome. This chain is Large ribosomal subunit protein uL14, found in Prosthecochloris aestuarii (strain DSM 271 / SK 413).